The chain runs to 242 residues: Pyridoxine 5'-phosphate synthase (242 aa).

Asn8 is a 3-amino-2-oxopropyl phosphate binding site. 1-deoxy-D-xylulose 5-phosphate is bound at residue 10–11; it reads DH. Residue Arg19 participates in 3-amino-2-oxopropyl phosphate binding. Residue His44 is the Proton acceptor of the active site. Residues Arg46 and His51 each contribute to the 1-deoxy-D-xylulose 5-phosphate site. The active-site Proton acceptor is Glu71. 1-deoxy-D-xylulose 5-phosphate is bound at residue Thr101. His193 (proton donor) is an active-site residue. 3-amino-2-oxopropyl phosphate-binding positions include Gly194 and 215–216; that span reads GF.

This sequence belongs to the PNP synthase family. As to quaternary structure, homooctamer; tetramer of dimers.

It localises to the cytoplasm. The catalysed reaction is 3-amino-2-oxopropyl phosphate + 1-deoxy-D-xylulose 5-phosphate = pyridoxine 5'-phosphate + phosphate + 2 H2O + H(+). It participates in cofactor biosynthesis; pyridoxine 5'-phosphate biosynthesis; pyridoxine 5'-phosphate from D-erythrose 4-phosphate: step 5/5. Its function is as follows. Catalyzes the complicated ring closure reaction between the two acyclic compounds 1-deoxy-D-xylulose-5-phosphate (DXP) and 3-amino-2-oxopropyl phosphate (1-amino-acetone-3-phosphate or AAP) to form pyridoxine 5'-phosphate (PNP) and inorganic phosphate. The sequence is that of Pyridoxine 5'-phosphate synthase from Elusimicrobium minutum (strain Pei191).